Consider the following 377-residue polypeptide: N-acetyldiaminopimelate deacetylase (377 aa).

The active site involves D69. E128 functions as the Proton acceptor in the catalytic mechanism.

Belongs to the peptidase M20A family. N-acetyldiaminopimelate deacetylase subfamily.

It carries out the reaction N-acetyl-(2S,6S)-2,6-diaminopimelate + H2O = (2S,6S)-2,6-diaminopimelate + acetate. The protein operates within amino-acid biosynthesis; L-lysine biosynthesis via DAP pathway; LL-2,6-diaminopimelate from (S)-tetrahydrodipicolinate (acetylase route): step 3/3. Its function is as follows. Catalyzes the conversion of N-acetyl-diaminopimelate to diaminopimelate and acetate. The protein is N-acetyldiaminopimelate deacetylase of Brevibacillus brevis (strain 47 / JCM 6285 / NBRC 100599).